We begin with the raw amino-acid sequence, 121 residues long: Large ribosomal subunit protein uL22 (121 aa).

It belongs to the universal ribosomal protein uL22 family. As to quaternary structure, part of the 50S ribosomal subunit.

Functionally, this protein binds specifically to 23S rRNA; its binding is stimulated by other ribosomal proteins, e.g. L4, L17, and L20. It is important during the early stages of 50S assembly. It makes multiple contacts with different domains of the 23S rRNA in the assembled 50S subunit and ribosome. The globular domain of the protein is located near the polypeptide exit tunnel on the outside of the subunit, while an extended beta-hairpin is found that lines the wall of the exit tunnel in the center of the 70S ribosome. This chain is Large ribosomal subunit protein uL22, found in Synechococcus sp. (strain CC9902).